The primary structure comprises 228 residues: DNA mismatch repair protein MutH (228 aa).

It belongs to the MutH family.

Its subcellular location is the cytoplasm. In terms of biological role, sequence-specific endonuclease that cleaves unmethylated GATC sequences. It is involved in DNA mismatch repair. In Serratia proteamaculans (strain 568), this protein is DNA mismatch repair protein MutH.